A 361-amino-acid polypeptide reads, in one-letter code: Probable dual-specificity RNA methyltransferase RlmN (361 aa).

Glu91 (proton acceptor) is an active-site residue. The 233-residue stretch at 97–329 folds into the Radical SAM core domain; the sequence is QHYGLSVCVT…KKKGGNCVVR (233 aa). Cys104 and Cys340 are oxidised to a cystine. Residues Cys111, Cys115, and Cys118 each contribute to the [4Fe-4S] cluster site. Residues 163–164, Ser195, 218–220, and Asn296 each bind S-adenosyl-L-methionine; these read GE and SLH. Cys340 serves as the catalytic S-methylcysteine intermediate.

Belongs to the radical SAM superfamily. RlmN family. It depends on [4Fe-4S] cluster as a cofactor.

It localises to the cytoplasm. The enzyme catalyses adenosine(2503) in 23S rRNA + 2 reduced [2Fe-2S]-[ferredoxin] + 2 S-adenosyl-L-methionine = 2-methyladenosine(2503) in 23S rRNA + 5'-deoxyadenosine + L-methionine + 2 oxidized [2Fe-2S]-[ferredoxin] + S-adenosyl-L-homocysteine. It carries out the reaction adenosine(37) in tRNA + 2 reduced [2Fe-2S]-[ferredoxin] + 2 S-adenosyl-L-methionine = 2-methyladenosine(37) in tRNA + 5'-deoxyadenosine + L-methionine + 2 oxidized [2Fe-2S]-[ferredoxin] + S-adenosyl-L-homocysteine. Specifically methylates position 2 of adenine 2503 in 23S rRNA and position 2 of adenine 37 in tRNAs. This is Probable dual-specificity RNA methyltransferase RlmN from Streptococcus pneumoniae (strain Hungary19A-6).